We begin with the raw amino-acid sequence, 519 residues long: ATP synthase subunit beta, mitochondrial (519 aa).

195–202 serves as a coordination point for ATP; that stretch reads GGAGVGKT.

The protein belongs to the ATPase alpha/beta chains family. F-type ATPases have 2 components, CF(1) - the catalytic core - and CF(0) - the membrane proton channel. CF(1) has five subunits: alpha(3), beta(3), gamma(1), delta(1), epsilon(1). CF(0) has three main subunits: a, b and c.

It localises to the mitochondrion. The protein localises to the mitochondrion inner membrane. The enzyme catalyses ATP + H2O + 4 H(+)(in) = ADP + phosphate + 5 H(+)(out). Functionally, mitochondrial membrane ATP synthase (F(1)F(0) ATP synthase or Complex V) produces ATP from ADP in the presence of a proton gradient across the membrane which is generated by electron transport complexes of the respiratory chain. F-type ATPases consist of two structural domains, F(1) - containing the extramembraneous catalytic core, and F(0) - containing the membrane proton channel, linked together by a central stalk and a peripheral stalk. During catalysis, ATP synthesis in the catalytic domain of F(1) is coupled via a rotary mechanism of the central stalk subunits to proton translocation. Subunits alpha and beta form the catalytic core in F(1). Rotation of the central stalk against the surrounding alpha(3)beta(3) subunits leads to hydrolysis of ATP in three separate catalytic sites on the beta subunits. The chain is ATP synthase subunit beta, mitochondrial (atp-2) from Neurospora crassa (strain ATCC 24698 / 74-OR23-1A / CBS 708.71 / DSM 1257 / FGSC 987).